The primary structure comprises 537 residues: 6-phosphogluconate dehydrogenase, decarboxylating 2, chloroplastic (537 aa).

The N-terminal 44 residues, 1 to 44, are a transit peptide targeting the chloroplast; it reads MRSEVPSSTSPSFLSPPFIHLPLLSLSSPTPLPHSSSSTFSLFS. NADP(+) contacts are provided by residues 55 to 60, 78 to 80, 122 to 124, and Asn-150; these read GLAVMG, NRT, and VKA. Substrate contacts are provided by residues Asn-150 and 176–178; that span reads SGG. Catalysis depends on Lys-230, which acts as the Proton acceptor. 233 to 234 is a substrate binding site; sequence HN. The active-site Proton donor is Glu-237. Positions 238, 308, 335, 500, and 506 each coordinate substrate.

The protein belongs to the 6-phosphogluconate dehydrogenase family. Homodimer.

Its subcellular location is the plastid. It is found in the chloroplast. It catalyses the reaction 6-phospho-D-gluconate + NADP(+) = D-ribulose 5-phosphate + CO2 + NADPH. It functions in the pathway carbohydrate degradation; pentose phosphate pathway; D-ribulose 5-phosphate from D-glucose 6-phosphate (oxidative stage): step 3/3. Catalyzes the oxidative decarboxylation of 6-phosphogluconate to ribulose 5-phosphate and CO(2), with concomitant reduction of NADP to NADPH. This Spinacia oleracea (Spinach) protein is 6-phosphogluconate dehydrogenase, decarboxylating 2, chloroplastic.